Here is a 179-residue protein sequence, read N- to C-terminus: Large ribosomal subunit protein uL5 (179 aa).

The protein belongs to the universal ribosomal protein uL5 family. As to quaternary structure, part of the 50S ribosomal subunit; part of the 5S rRNA/L5/L18/L25 subcomplex. Contacts the 5S rRNA and the P site tRNA. Forms a bridge to the 30S subunit in the 70S ribosome.

Its function is as follows. This is one of the proteins that bind and probably mediate the attachment of the 5S RNA into the large ribosomal subunit, where it forms part of the central protuberance. In the 70S ribosome it contacts protein S13 of the 30S subunit (bridge B1b), connecting the 2 subunits; this bridge is implicated in subunit movement. Contacts the P site tRNA; the 5S rRNA and some of its associated proteins might help stabilize positioning of ribosome-bound tRNAs. This is Large ribosomal subunit protein uL5 from Xylella fastidiosa (strain M23).